The sequence spans 384 residues: Formate-dependent phosphoribosylglycinamide formyltransferase (384 aa).

Residues 14–15 and E74 contribute to the N(1)-(5-phospho-beta-D-ribosyl)glycinamide site; that span reads EL. ATP-binding positions include R106, K147, 152–157, 187–190, and E195; these read SSGKGQ and EEFI. The ATP-grasp domain occupies 111–300; it reads RLAAETLHLP…EFALHVRAVL (190 aa). 2 residues coordinate Mg(2+): E259 and E271. N(1)-(5-phospho-beta-D-ribosyl)glycinamide contacts are provided by residues D278, K348, and 355-356; that span reads RR.

Belongs to the PurK/PurT family. In terms of assembly, homodimer.

It carries out the reaction N(1)-(5-phospho-beta-D-ribosyl)glycinamide + formate + ATP = N(2)-formyl-N(1)-(5-phospho-beta-D-ribosyl)glycinamide + ADP + phosphate + H(+). It functions in the pathway purine metabolism; IMP biosynthesis via de novo pathway; N(2)-formyl-N(1)-(5-phospho-D-ribosyl)glycinamide from N(1)-(5-phospho-D-ribosyl)glycinamide (formate route): step 1/1. In terms of biological role, involved in the de novo purine biosynthesis. Catalyzes the transfer of formate to 5-phospho-ribosyl-glycinamide (GAR), producing 5-phospho-ribosyl-N-formylglycinamide (FGAR). Formate is provided by PurU via hydrolysis of 10-formyl-tetrahydrofolate. In Bacillus velezensis (strain DSM 23117 / BGSC 10A6 / LMG 26770 / FZB42) (Bacillus amyloliquefaciens subsp. plantarum), this protein is Formate-dependent phosphoribosylglycinamide formyltransferase.